The chain runs to 348 residues: Protein DMR6-LIKE OXYGENASE 2 (348 aa).

The Fe2OG dioxygenase domain occupies 194 to 294 (KHGQHMAINY…RISIPTFYCP (101 aa)). The Fe cation site is built by His219, Asp221, and His275. Position 285 (Arg285) interacts with 2-oxoglutarate.

Belongs to the iron/ascorbate-dependent oxidoreductase family. Requires Fe(2+) as cofactor.

The enzyme catalyses salicylate + NADH + O2 + H(+) = 2,3-dihydroxybenzoate + NAD(+) + H2O. Functionally, converts salicylic acid (SA) to 2,3-dihydroxybenzoic acid (2,3-DHBA). Negative regulator of defense against Hyaloperonospora arabidopsidis. (Microbial infection) Confers susceptibility to the downy mildew pathogen Hyaloperonospora arabidopsidis. The polypeptide is Protein DMR6-LIKE OXYGENASE 2 (Arabidopsis thaliana (Mouse-ear cress)).